A 249-amino-acid polypeptide reads, in one-letter code: Tegument protein UL51 homolog (249 aa).

Belongs to the herpesviridae UL51 family. In terms of assembly, oligomerizes. Interacts with MDV019; this interaction mediates MDV019 incorporation to virions. Phosphorylated.

Its subcellular location is the virion tegument. The protein resides in the host cytoplasm. It is found in the host Golgi apparatus. In terms of biological role, plays several roles during the time course of infection, including egress of virus particles from the perinuclear space and secondary envelopment of cytoplasmic capsids that bud into specific trans-Golgi network (TGN)-derived membranes. The chain is Tegument protein UL51 homolog (MDV065) from Gallus gallus (Chicken).